Here is a 177-residue protein sequence, read N- to C-terminus: Nucleoside triphosphate/diphosphate phosphatase (177 aa).

Residue arginine 23 is the Proton donor of the active site. Asparagine 87, aspartate 103, aspartate 105, aspartate 107, aspartate 120, and glutamate 123 together coordinate Mg(2+).

It belongs to the Ntdp family. The cofactor is Mg(2+).

The catalysed reaction is a ribonucleoside 5'-triphosphate + H2O = a ribonucleoside 5'-diphosphate + phosphate + H(+). It catalyses the reaction a ribonucleoside 5'-diphosphate + H2O = a ribonucleoside 5'-phosphate + phosphate + H(+). In terms of biological role, has nucleoside phosphatase activity towards nucleoside triphosphates and nucleoside diphosphates. The protein is Nucleoside triphosphate/diphosphate phosphatase of Streptococcus thermophilus (strain ATCC BAA-491 / LMD-9).